The chain runs to 300 residues: MTHFSTIGLIGHLNNERAVYSIERLIRFLQQRGKDFVLEVETAARISDIALTQAARQIMDMDALGQICDLVIVVGGDGSLLSGARALAKYQVPLLGVNRGRLGFLTDITPEQIEQKMAEVLTGQFASEKRFLLDMEVRRDGQVIALADALNDVVLHTGQFIHMLEFEIHVDGSFVTSQRSDGLIVSTPTGSTAYSLSGGGPILHPKLDAIVIVPMNPHTLSSRPIVVSGDSEILLMVGEHNRALPMVTCDGHSHAEVQTGDEIIIRKKPQLLELLHPLDYNFYERCRSKLGWGGHLLKPE.

Aspartate 77 (proton acceptor) is an active-site residue. Residues 77 to 78 (DG), 151 to 152 (ND), histidine 162, arginine 179, aspartate 181, and 192 to 197 (TAYSLS) each bind NAD(+).

This sequence belongs to the NAD kinase family. It depends on a divalent metal cation as a cofactor.

Its subcellular location is the cytoplasm. It catalyses the reaction NAD(+) + ATP = ADP + NADP(+) + H(+). Its function is as follows. Involved in the regulation of the intracellular balance of NAD and NADP, and is a key enzyme in the biosynthesis of NADP. Catalyzes specifically the phosphorylation on 2'-hydroxyl of the adenosine moiety of NAD to yield NADP. The protein is NAD kinase of Cellvibrio japonicus (strain Ueda107) (Pseudomonas fluorescens subsp. cellulosa).